Reading from the N-terminus, the 257-residue chain is Snake venom serine protease KN8 (257 aa).

The N-terminal stretch at 1–18 is a signal peptide; it reads MVLIRVLANLLILQLSYA. Positions 19–24 are excised as a propeptide; the sequence is QKSSEL. Positions 25-248 constitute a Peptidase S1 domain; that stretch reads VVGGLPCNIN…HLDWIKSIIA (224 aa). Cystine bridges form between Cys-31-Cys-162, Cys-49-Cys-65, Cys-141-Cys-209, Cys-173-Cys-188, and Cys-199-Cys-224. The active-site Charge relay system is His-64. N-linked (GlcNAc...) asparagine glycosylation is present at Asn-102. Asp-109 acts as the Charge relay system in catalysis. 2 N-linked (GlcNAc...) asparagine glycosylation sites follow: Asn-120 and Asn-121. Ser-203 serves as the catalytic Charge relay system.

It belongs to the peptidase S1 family. Snake venom subfamily. As to quaternary structure, monomer. In terms of tissue distribution, expressed by the venom gland.

The protein localises to the secreted. Functionally, snake venom serine protease that may act in the hemostasis system of the prey. The polypeptide is Snake venom serine protease KN8 (Trimeresurus stejnegeri (Chinese green tree viper)).